The primary structure comprises 165 residues: Xanthine-guanine phosphoribosyltransferase (165 aa).

5-phospho-alpha-D-ribose 1-diphosphate contacts are provided by residues 41-42 (RG) and 98-106 (DDLTDTGKT). Asp99 lines the Mg(2+) pocket. Positions 102 and 145 each coordinate guanine. Asp102 and Ile145 together coordinate xanthine. GMP-binding positions include 102–106 (DTGKT) and 144–145 (WI).

This sequence belongs to the purine/pyrimidine phosphoribosyltransferase family. XGPT subfamily. Homotetramer. It depends on Mg(2+) as a cofactor.

It is found in the cell inner membrane. It carries out the reaction GMP + diphosphate = guanine + 5-phospho-alpha-D-ribose 1-diphosphate. The enzyme catalyses XMP + diphosphate = xanthine + 5-phospho-alpha-D-ribose 1-diphosphate. The catalysed reaction is IMP + diphosphate = hypoxanthine + 5-phospho-alpha-D-ribose 1-diphosphate. Its pathway is purine metabolism; GMP biosynthesis via salvage pathway; GMP from guanine: step 1/1. The protein operates within purine metabolism; XMP biosynthesis via salvage pathway; XMP from xanthine: step 1/1. Its function is as follows. Purine salvage pathway enzyme that catalyzes the transfer of the ribosyl-5-phosphate group from 5-phospho-alpha-D-ribose 1-diphosphate (PRPP) to the N9 position of the 6-oxopurines guanine and xanthine to form the corresponding ribonucleotides GMP (guanosine 5'-monophosphate) and XMP (xanthosine 5'-monophosphate), with the release of PPi. To a lesser extent, also acts on hypoxanthine. In Rhizobium meliloti (strain 1021) (Ensifer meliloti), this protein is Xanthine-guanine phosphoribosyltransferase.